The sequence spans 122 residues: Large ribosomal subunit protein uL18 (122 aa).

This sequence belongs to the universal ribosomal protein uL18 family. Part of the 50S ribosomal subunit; part of the 5S rRNA/L5/L18/L25 subcomplex. Contacts the 5S and 23S rRNAs.

In terms of biological role, this is one of the proteins that bind and probably mediate the attachment of the 5S RNA into the large ribosomal subunit, where it forms part of the central protuberance. This Leptospira interrogans serogroup Icterohaemorrhagiae serovar copenhageni (strain Fiocruz L1-130) protein is Large ribosomal subunit protein uL18.